We begin with the raw amino-acid sequence, 123 residues long: Small ribosomal subunit protein uS12cz/uS12cy (123 aa).

The protein belongs to the universal ribosomal protein uS12 family. Part of the 30S ribosomal subunit.

Its subcellular location is the plastid. It is found in the chloroplast. Functionally, with S4 and S5 plays an important role in translational accuracy. Located at the interface of the 30S and 50S subunits. The protein is Small ribosomal subunit protein uS12cz/uS12cy (rps12-A) of Angiopteris evecta (Mule's foot fern).